The sequence spans 142 residues: Anti-sigma F factor (142 aa).

It belongs to the anti-sigma-factor family.

It carries out the reaction L-seryl-[protein] + ATP = O-phospho-L-seryl-[protein] + ADP + H(+). The catalysed reaction is L-threonyl-[protein] + ATP = O-phospho-L-threonyl-[protein] + ADP + H(+). Functionally, binds to sigma F and blocks its ability to form an RNA polymerase holoenzyme (E-sigma F). Phosphorylates SpoIIAA on a serine residue. This phosphorylation may enable SpoIIAA to act as an anti-anti-sigma factor that counteracts SpoIIAB and thus releases sigma F from inhibition. The protein is Anti-sigma F factor of Clostridium kluyveri (strain NBRC 12016).